A 491-amino-acid chain; its full sequence is HEPACAM family member 2 (491 aa).

The first 18 residues, 1 to 18 (MWLRVFTAFLSFTAGACS), serve as a signal peptide directing secretion. 3 N-linked (GlcNAc...) asparagine glycosylation sites follow: asparagine 73, asparagine 117, and asparagine 153. Ig-like C2-type domains are found at residues 137-221 (PVVQ…SDII) and 223-319 (PTIY…THFT). Intrachain disulfides connect cysteine 158/cysteine 207 and cysteine 258/cysteine 303. N-linked (GlcNAc...) asparagine glycosylation occurs at asparagine 308. The chain crosses the membrane as a helical span at residues 340 to 360 (LASITGISLFLIISMCLLFLW). The Cytoplasmic portion of the chain corresponds to 361 to 491 (KKFQPYKVIK…GKHSRAKQCI (131 aa)). Positions 444 to 454 (QQQDHPESSSQ) are enriched in polar residues. 2 disordered regions span residues 444-466 (QQQD…DRHD) and 472-491 (ELGH…KQCI). Positions 472 to 482 (ELGHCKEQDKG) are enriched in basic and acidic residues.

In terms of processing, poly-ADP-ribosylated (PARsylated) by tankyrase TNKS during late G2 and prophase, leading to translocation to mitotic centrosomes. N-glycosylated.

The protein localises to the golgi apparatus membrane. It is found in the cytoplasm. Its subcellular location is the cytoskeleton. It localises to the spindle. The protein resides in the microtubule organizing center. The protein localises to the centrosome. It is found in the midbody. In terms of biological role, required during prometaphase for centrosome maturation. Following poly-ADP-ribosylation (PARsylation) by TNKS, translocates from the Golgi apparatus to mitotic centrosomes and plays a key role in the formation of robust microtubules for prompt movement of chromosomes: anchors AKAP9/CG-NAP, a scaffold protein of the gamma-tubulin ring complex and promotes centrosome maturation. The protein is HEPACAM family member 2 (HEPACAM2) of Bos taurus (Bovine).